A 345-amino-acid chain; its full sequence is Eukaryotic translation initiation factor 3 subunit F (345 aa).

Residues 30–166 (VVIQPQALFS…TRAYISAPVG (137 aa)) form the MPN domain. Residues 308-345 (GGESGSTESGQRGGQRGGKGGRGGQQRNQERSGEEVRA) form a disordered region. The segment covering 318–331 (QRGGQRGGKGGRGG) has biased composition (gly residues). The span at 335-345 (NQERSGEEVRA) shows a compositional bias: basic and acidic residues.

The protein belongs to the eIF-3 subunit F family. As to quaternary structure, component of the eukaryotic translation initiation factor 3 (eIF-3) complex.

Its subcellular location is the cytoplasm. Functionally, component of the eukaryotic translation initiation factor 3 (eIF-3) complex, which is involved in protein synthesis of a specialized repertoire of mRNAs and, together with other initiation factors, stimulates binding of mRNA and methionyl-tRNAi to the 40S ribosome. The eIF-3 complex specifically targets and initiates translation of a subset of mRNAs involved in cell proliferation. The sequence is that of Eukaryotic translation initiation factor 3 subunit F from Aspergillus terreus (strain NIH 2624 / FGSC A1156).